The following is a 228-amino-acid chain: Protein GrpE (228 aa).

Disordered regions lie at residues 1-31 (MADEKNKSQNPDLEQRDINNPRDREALNRAA) and 209-228 (GVSKGGPKATADNGASEGNG).

Belongs to the GrpE family. As to quaternary structure, homodimer.

It is found in the cytoplasm. Its function is as follows. Participates actively in the response to hyperosmotic and heat shock by preventing the aggregation of stress-denatured proteins, in association with DnaK and GrpE. It is the nucleotide exchange factor for DnaK and may function as a thermosensor. Unfolded proteins bind initially to DnaJ; upon interaction with the DnaJ-bound protein, DnaK hydrolyzes its bound ATP, resulting in the formation of a stable complex. GrpE releases ADP from DnaK; ATP binding to DnaK triggers the release of the substrate protein, thus completing the reaction cycle. Several rounds of ATP-dependent interactions between DnaJ, DnaK and GrpE are required for fully efficient folding. In Brucella anthropi (strain ATCC 49188 / DSM 6882 / CCUG 24695 / JCM 21032 / LMG 3331 / NBRC 15819 / NCTC 12168 / Alc 37) (Ochrobactrum anthropi), this protein is Protein GrpE.